The following is a 178-amino-acid chain: uncharacterized protein (178 aa).

Helical transmembrane passes span 13–33 (GIVL…FFMP), 48–68 (MLNA…LIMI), 80–100 (ILAA…YHSI), 115–135 (IYFF…PLAL), and 155–175 (WTMP…LMIS).

The protein resides in the cell membrane. This is an uncharacterized protein from Bacillus subtilis (strain 168).